A 733-amino-acid chain; its full sequence is Photosystem I P700 chlorophyll a apoprotein A2 (733 aa).

8 consecutive transmembrane segments (helical) span residues 46-69 (IFAS…FHVA), 134-157 (LYKG…LHLQ), 174-198 (LNHH…HVAI), 272-290 (MAHH…GHMY), 329-352 (LHMQ…QHMY), 368-394 (AALY…IFFV), 416-438 (AIIS…LYIH), and 516-534 (FLVH…LILV). 2 residues coordinate [4Fe-4S] cluster: cysteine 558 and cysteine 567. 2 helical membrane-spanning segments follow: residues 574-595 (AFYL…YWHW) and 642-664 (LSVW…MFLI). Chlorophyll a contacts are provided by histidine 653, methionine 661, and tyrosine 669. Tryptophan 670 contacts phylloquinone. A helical membrane pass occupies residues 706–726 (LVGLVHFSVGYILTYAAFVIA).

The protein belongs to the PsaA/PsaB family. As to quaternary structure, the PsaA/B heterodimer binds the P700 chlorophyll special pair and subsequent electron acceptors. PSI consists of a core antenna complex that captures photons, and an electron transfer chain that converts photonic excitation into a charge separation. The eukaryotic PSI reaction center is composed of at least 11 subunits. The cofactor is P700 is a chlorophyll a/chlorophyll a' dimer, A0 is one or more chlorophyll a, A1 is one or both phylloquinones and FX is a shared 4Fe-4S iron-sulfur center..

The protein localises to the plastid. The protein resides in the chloroplast thylakoid membrane. It catalyses the reaction reduced [plastocyanin] + hnu + oxidized [2Fe-2S]-[ferredoxin] = oxidized [plastocyanin] + reduced [2Fe-2S]-[ferredoxin]. In terms of biological role, psaA and PsaB bind P700, the primary electron donor of photosystem I (PSI), as well as the electron acceptors A0, A1 and FX. PSI is a plastocyanin/cytochrome c6-ferredoxin oxidoreductase, converting photonic excitation into a charge separation, which transfers an electron from the donor P700 chlorophyll pair to the spectroscopically characterized acceptors A0, A1, FX, FA and FB in turn. Oxidized P700 is reduced on the lumenal side of the thylakoid membrane by plastocyanin or cytochrome c6. This chain is Photosystem I P700 chlorophyll a apoprotein A2, found in Thalassiosira pseudonana (Marine diatom).